The sequence spans 314 residues: Methionyl-tRNA formyltransferase (314 aa).

Residue 109–112 (SVLP) coordinates (6S)-5,6,7,8-tetrahydrofolate.

This sequence belongs to the Fmt family.

The enzyme catalyses L-methionyl-tRNA(fMet) + (6R)-10-formyltetrahydrofolate = N-formyl-L-methionyl-tRNA(fMet) + (6S)-5,6,7,8-tetrahydrofolate + H(+). Its function is as follows. Attaches a formyl group to the free amino group of methionyl-tRNA(fMet). The formyl group appears to play a dual role in the initiator identity of N-formylmethionyl-tRNA by promoting its recognition by IF2 and preventing the misappropriation of this tRNA by the elongation apparatus. In Dictyoglomus turgidum (strain DSM 6724 / Z-1310), this protein is Methionyl-tRNA formyltransferase.